Here is a 792-residue protein sequence, read N- to C-terminus: Phenylalanine--tRNA ligase beta subunit (792 aa).

Residues 39–147 (GESLGQVVVA…DDAPVGQALA (109 aa)) form the tRNA-binding domain. In terms of domain architecture, B5 spans 400–475 (PQPARILLRR…RIHGYDRVPT (76 aa)). Mg(2+)-binding residues include D453, D459, E462, and D463. The region spanning 698 to 791 (SRFPSVRRDL…IEREHRARIR (94 aa)) is the FDX-ACB domain.

Belongs to the phenylalanyl-tRNA synthetase beta subunit family. Type 1 subfamily. In terms of assembly, tetramer of two alpha and two beta subunits. It depends on Mg(2+) as a cofactor.

It localises to the cytoplasm. The catalysed reaction is tRNA(Phe) + L-phenylalanine + ATP = L-phenylalanyl-tRNA(Phe) + AMP + diphosphate + H(+). The polypeptide is Phenylalanine--tRNA ligase beta subunit (Xanthomonas oryzae pv. oryzae (strain MAFF 311018)).